The following is a 385-amino-acid chain: Glucans biosynthesis protein C (385 aa).

10 helical membrane-spanning segments follow: residues 17-37 (AWLMLLGIPFHISLIYSSHTW), 60-80 (MQVFFVISGYFSYMLFLRYPL), 91-111 (VGIPMLTAIPLLTLPQFIMLQ), 137-157 (ISHLWFLLVLVVMTTLCVWIF), 173-193 (KFSMVKLSVIFLCLGIGYAVI), 212-232 (FIVMQTLFYLPFFILGALAFI), 245-262 (RGSTLAAALAFVAYLLNQ), 274-294 (TESVITMVLGLWMVNVVFSFG), 311-331 (ASLFIYLVHHPLTLFFGAYIT), and 338-358 (WLGFLCGLIFVVGIAIILYEI).

It belongs to the acyltransferase 3 family. OpgC subfamily.

It localises to the cell membrane. Its pathway is glycan metabolism; osmoregulated periplasmic glucan (OPG) biosynthesis. Necessary for the succinyl substitution of periplasmic glucans. Could catalyze the transfer of succinyl residues from the cytoplasmic side of the membrane to the nascent glucan backbones on the periplasmic side of the membrane. The chain is Glucans biosynthesis protein C from Escherichia coli O81 (strain ED1a).